We begin with the raw amino-acid sequence, 380 residues long: E3 ubiquitin-protein ligase RNF13 (380 aa).

Positions 1–34 are cleaved as a signal peptide; the sequence is MLLSIGMLMLSATQVYTILTVQLFAFLNLLPVEA. Residues 35–182 are Lumenal-facing; the sequence is DILAYNFENA…VPELSLPLEY (148 aa). The 97-residue stretch at 64–160 folds into the PA domain; the sequence is LKGFLINSKP…GESSANSLKD (97 aa). The N-linked (GlcNAc...) asparagine glycan is linked to N88. The helical transmembrane segment at 183 to 203 threads the bilayer; the sequence is YLIPFLIIVGICLILIVIFMI. At 204–380 the chain is on the cytoplasmic side; sequence TKFVQDRHRN…EPDYNIANTV (177 aa). An RING-type; atypical zinc finger spans residues 240-282; that stretch reads CAICLEEYEDGDKLRILPCSHAYHCKCVDPWLTKTKKTCPVCK. The segment at 285 to 380 is disordered; it reads VVPSQGDSDS…EPDYNIANTV (96 aa). Acidic residues predominate over residues 338-356; the sequence is SDYEDDDNEETDSSDADNE.

Interacts with ERN1. Post-translationally, autoubiquitinated.

It is found in the endoplasmic reticulum membrane. Its subcellular location is the late endosome membrane. The protein resides in the lysosome membrane. The protein localises to the nucleus inner membrane. It carries out the reaction S-ubiquitinyl-[E2 ubiquitin-conjugating enzyme]-L-cysteine + [acceptor protein]-L-lysine = [E2 ubiquitin-conjugating enzyme]-L-cysteine + N(6)-ubiquitinyl-[acceptor protein]-L-lysine.. Its pathway is protein modification; protein ubiquitination. E3 ubiquitin-protein ligase that regulates cell proliferation. Involved in apoptosis regulation. Mediates ER stress-induced activation of JNK signaling pathway and apoptosis by promoting ERN1 activation and splicing of XBP1 mRNA. Also involved in protein trafficking and localization. The sequence is that of E3 ubiquitin-protein ligase RNF13 (Rnf13) from Rattus norvegicus (Rat).